The following is a 160-amino-acid chain: C-type lectin mosGCTL-1 (160 aa).

Residues 1-20 (MLTKGITLILLLVLVHSSHG) form the signal peptide. Residues 23-140 (TPNRKFYIPS…YHWSWNDNTC (118 aa)) enclose the C-type lectin domain. Disulfide bonds link Cys44/Cys140 and Cys120/Cys140. N-linked (GlcNAc...) asparagine glycosylation occurs at Asn76.

As to quaternary structure, interacts with putative receptor-type tyrosine-protein phosphatase mosPTP-1; the interaction probably mediates the recruitment of West Nile virus particles in complex with C-type lectin mosGCTL-1 to the cell surface. In terms of assembly, (Microbial infection) Interacts with envelope protein E and virions of West Nile virus in a calcium-dependent manner. Female salivary gland (at protein level).

The protein localises to the secreted. In terms of biological role, putative lectin. Functionally, (Microbial infection) Facilitates West Nile virus infection in mosquitoes probably via capturing viral particles and presenting them to a ligand on the cell surface, thereby facilitating viral entry. The protein is C-type lectin mosGCTL-1 of Aedes aegypti (Yellowfever mosquito).